The primary structure comprises 480 residues: Transmembrane protein 161A (480 aa).

An N-terminal signal peptide occupies residues 1 to 28; that stretch reads MAVLGVQLVVTLFTATLMHRLAPHCSFA. At 29–98 the chain is on the extracellular side; that stretch reads RWLLCNGSLF…LTAVDALVLR (70 aa). Asparagine 34 is a glycosylation site (N-linked (GlcNAc...) asparagine). Residues 99–119 traverse the membrane as a helical segment; sequence FFLEYQWFVDFAVYSVGVYLF. Residues 120-134 are Cytoplasmic-facing; it reads TEAYYFVLGPVQETN. A helical membrane pass occupies residues 135–155; the sequence is IAVFWCLLTLAFSLKVFLMVT. Topologically, residues 156–166 are extracellular; that stretch reads RLYFSTKEGGE. The chain crosses the membrane as a helical span at residues 167–187; sequence RSVCLSFAFLFLLLAMLVQVV. At 188 to 224 the chain is on the cytoplasmic side; it reads REETLELGLEPGLASMTQHLEPILKKQDWDWTLPVIK. The chain crosses the membrane as a helical span at residues 225–245; sequence LAIRLGLAVLGSLLGAFLIFP. Residues 246-263 are Extracellular-facing; that stretch reads GLRLAQTHQDALTLSADR. Residues 264–284 form a helical membrane-spanning segment; the sequence is PLLQLLLHTSFLSPLCTLWLW. The Cytoplasmic segment spans residues 285–304; it reads TKPVARDFLYQAPTRNMTFS. A helical transmembrane segment spans residues 305 to 325; sequence VPSEGAFDSLRLWVLVALCLL. Residues 326–370 lie on the Extracellular side of the membrane; it reads RLAVTRPHLQAYLCLAKARVEQLRKEAGRIEAREIQQRVVRVYCY. A helical membrane pass occupies residues 371 to 391; sequence VTVVSLQYLTPLILTLHCTLL. The Cytoplasmic portion of the chain corresponds to 392–450; it reads LKTLGGYSWALSSTPPPLAPSQPSEALIPVDPAGDEAQQTAAQVAGILGGLLTPLFLRG. A helical membrane pass occupies residues 451-473; sequence MLAYIIWWTAACQLLSSLFGLYF. Residues 474-480 lie on the Extracellular side of the membrane; sequence HQHLAAS.

The protein belongs to the TMEM161 family.

The protein localises to the membrane. Its function is as follows. May play a role in protection against oxidative stress. Overexpression leads to reduced levels of oxidant-induced DNA damage and apoptosis. This Mus musculus (Mouse) protein is Transmembrane protein 161A (Tmem161a).